Consider the following 201-residue polypeptide: Translation machinery-associated protein 22 (201 aa).

The 72-residue stretch at 104-175 (VTVKRIERNK…EIKEFIVEKY (72 aa)) folds into the SUI1 domain.

It belongs to the DENR family. As to quaternary structure, interacts with the 40S ribosomal subunit.

Its subcellular location is the cytoplasm. This Pyricularia oryzae (strain 70-15 / ATCC MYA-4617 / FGSC 8958) (Rice blast fungus) protein is Translation machinery-associated protein 22 (TMA22).